The chain runs to 286 residues: Small ribosomal subunit protein uS3 (286 aa).

In terms of domain architecture, KH type-2 spans Val-39–Arg-107. The disordered stretch occupies residues Gln-213–Ser-286. Residues Gly-241–Asn-262 show a composition bias toward basic and acidic residues.

The protein belongs to the universal ribosomal protein uS3 family. Part of the 30S ribosomal subunit. Forms a tight complex with proteins S10 and S14.

Functionally, binds the lower part of the 30S subunit head. Binds mRNA in the 70S ribosome, positioning it for translation. The sequence is that of Small ribosomal subunit protein uS3 from Nitrosospira multiformis (strain ATCC 25196 / NCIMB 11849 / C 71).